We begin with the raw amino-acid sequence, 177 residues long: Inorganic pyrophosphatase (177 aa).

Residues Lys30, Arg44, and Tyr56 each coordinate substrate. Residues Asp66, Asp71, and Asp103 each contribute to the Mg(2+) site. Tyr142 provides a ligand contact to substrate.

Belongs to the PPase family. In terms of assembly, homohexamer. Mg(2+) is required as a cofactor.

It is found in the cytoplasm. The enzyme catalyses diphosphate + H2O = 2 phosphate + H(+). Its function is as follows. Catalyzes the hydrolysis of inorganic pyrophosphate (PPi) forming two phosphate ions. The chain is Inorganic pyrophosphatase from Agrobacterium fabrum (strain C58 / ATCC 33970) (Agrobacterium tumefaciens (strain C58)).